A 231-amino-acid chain; its full sequence is DNA mismatch repair protein MutH (231 aa).

It belongs to the MutH family.

It localises to the cytoplasm. Sequence-specific endonuclease that cleaves unmethylated GATC sequences. It is involved in DNA mismatch repair. This chain is DNA mismatch repair protein MutH, found in Pectobacterium atrosepticum (strain SCRI 1043 / ATCC BAA-672) (Erwinia carotovora subsp. atroseptica).